The primary structure comprises 133 residues: Small ribosomal subunit protein eS8 (133 aa).

The segment at 1–31 is disordered; that stretch reads MGFYQGPDNRKITGGLKGKHRDKRKYEIGNP.

It belongs to the eukaryotic ribosomal protein eS8 family. In terms of assembly, part of the 30S ribosomal subunit.

The protein is Small ribosomal subunit protein eS8 of Saccharolobus solfataricus (strain ATCC 35092 / DSM 1617 / JCM 11322 / P2) (Sulfolobus solfataricus).